The following is a 179-amino-acid chain: Large ribosomal subunit protein uL5 (179 aa).

Belongs to the universal ribosomal protein uL5 family. Part of the 50S ribosomal subunit; part of the 5S rRNA/L5/L18/L25 subcomplex. Contacts the 5S rRNA and the P site tRNA. Forms a bridge to the 30S subunit in the 70S ribosome.

This is one of the proteins that bind and probably mediate the attachment of the 5S RNA into the large ribosomal subunit, where it forms part of the central protuberance. In the 70S ribosome it contacts protein S13 of the 30S subunit (bridge B1b), connecting the 2 subunits; this bridge is implicated in subunit movement. Contacts the P site tRNA; the 5S rRNA and some of its associated proteins might help stabilize positioning of ribosome-bound tRNAs. The chain is Large ribosomal subunit protein uL5 from Haemophilus ducreyi (strain 35000HP / ATCC 700724).